An 84-amino-acid polypeptide reads, in one-letter code: Small ribosomal subunit protein bS20 (84 aa).

A disordered region spans residues 1–25 (MANIVSNEKTYRHTQKVRKENHAKM).

Belongs to the bacterial ribosomal protein bS20 family.

Binds directly to 16S ribosomal RNA. In Ureaplasma urealyticum serovar 10 (strain ATCC 33699 / Western), this protein is Small ribosomal subunit protein bS20.